Reading from the N-terminus, the 231-residue chain is Phosphatidylserine decarboxylase proenzyme (231 aa).

Serine 189 acts as the Schiff-base intermediate with substrate; via pyruvic acid in catalysis. Serine 189 bears the Pyruvic acid (Ser); by autocatalysis mark.

The protein belongs to the phosphatidylserine decarboxylase family. PSD-A subfamily. As to quaternary structure, heterodimer of a large membrane-associated beta subunit and a small pyruvoyl-containing alpha subunit. Requires pyruvate as cofactor. In terms of processing, is synthesized initially as an inactive proenzyme. Formation of the active enzyme involves a self-maturation process in which the active site pyruvoyl group is generated from an internal serine residue via an autocatalytic post-translational modification. Two non-identical subunits are generated from the proenzyme in this reaction, and the pyruvate is formed at the N-terminus of the alpha chain, which is derived from the carboxyl end of the proenzyme. The post-translation cleavage follows an unusual pathway, termed non-hydrolytic serinolysis, in which the side chain hydroxyl group of the serine supplies its oxygen atom to form the C-terminus of the beta chain, while the remainder of the serine residue undergoes an oxidative deamination to produce ammonia and the pyruvoyl prosthetic group on the alpha chain.

The protein resides in the cell membrane. It catalyses the reaction a 1,2-diacyl-sn-glycero-3-phospho-L-serine + H(+) = a 1,2-diacyl-sn-glycero-3-phosphoethanolamine + CO2. The protein operates within phospholipid metabolism; phosphatidylethanolamine biosynthesis; phosphatidylethanolamine from CDP-diacylglycerol: step 2/2. Functionally, catalyzes the formation of phosphatidylethanolamine (PtdEtn) from phosphatidylserine (PtdSer). This Chelativorans sp. (strain BNC1) protein is Phosphatidylserine decarboxylase proenzyme.